The sequence spans 146 residues: Ribonuclease H (146 aa).

An RNase H type-1 domain is found at 1–143; the sequence is MQKKVTIYTD…CDYLATQAIK (143 aa). Positions 10, 48, 70, and 135 each coordinate Mg(2+).

The protein belongs to the RNase H family. In terms of assembly, monomer. It depends on Mg(2+) as a cofactor.

The protein localises to the cytoplasm. The enzyme catalyses Endonucleolytic cleavage to 5'-phosphomonoester.. Functionally, endonuclease that specifically degrades the RNA of RNA-DNA hybrids. This chain is Ribonuclease H, found in Chlorobium phaeobacteroides (strain BS1).